The chain runs to 78 residues: Mu-conotoxin BuIIIB (78 aa).

The signal sequence occupies residues 1–22 (MMSKLGVLLTICLLLFPLFALP). The propeptide occupies 23 to 51 (QDGDQPADRPAERMQDDISSEQNPLLEKR). Positions 26-46 (DQPADRPAERMQDDISSEQNP) are disordered. Residues 28–38 (PADRPAERMQD) are compositionally biased toward basic and acidic residues. Intrachain disulfides connect Cys56/Cys68, Cys57/Cys74, and Cys64/Cys75. Residue Cys75 is modified to Cysteine amide.

Belongs to the conotoxin M superfamily. Expressed by the venom duct.

It localises to the secreted. Mu-conotoxins block voltage-gated sodium channels (Nav). This synthetic toxin potently blocks rNav1.4/SCN4A (Kd=0.34-3.6 nM), rNav1.2/SCN2A (Kd=13 nM), rNav1.3/SCN3A (Kd=200 nM), rNav1.1/SCN1A (Kd=360 nM), mNav1.6/SCN8A (IC(50)=1.8 uM), rNav1.5/SCN5A (IC(50)=9 uM), rNav1.6/SCN8A (IC(50)&gt;30 uM). It is noteworthy that the toxin is 50-fold more potent on mouse Nav1.6 than on rat Nav1.6. The block of SCN4A is very slowly reversible. This is Mu-conotoxin BuIIIB from Conus bullatus (Bubble cone).